The following is a 357-amino-acid chain: GTPase Obg (357 aa).

Positions Met1–Leu159 constitute an Obg domain. Residues Ala160 to Glu343 form the OBG-type G domain. GTP-binding positions include Gly166 to Ser173, Phe191 to Tyr195, Asp213 to Gly216, Asn293 to Asp296, and Ser324 to Val326. Mg(2+) contacts are provided by Ser173 and Thr193.

This sequence belongs to the TRAFAC class OBG-HflX-like GTPase superfamily. OBG GTPase family. In terms of assembly, monomer. Mg(2+) serves as cofactor.

The protein localises to the cytoplasm. In terms of biological role, an essential GTPase which binds GTP, GDP and possibly (p)ppGpp with moderate affinity, with high nucleotide exchange rates and a fairly low GTP hydrolysis rate. Plays a role in control of the cell cycle, stress response, ribosome biogenesis and in those bacteria that undergo differentiation, in morphogenesis control. The sequence is that of GTPase Obg from Xylella fastidiosa (strain M23).